The chain runs to 292 residues: MIELRQLSKAIDGNQVLKDVSLTIEKGEIFGLLGRNGSGKTTMLRLIQQIIFADSGTILFDGVEIKKHPKVKQNIIYMPVQNPFYDKYTYKQLVDILRRIYPKFDVTYANELMNRYEIPETKKYRELSTGLKKQLSLVLSFAARPALILLDEPTDGIDAVTRHDVLQLMVDEVAERDTSILITSHRLEDIERMCNRIGFLEDNSLTNVMDLDELKEEYIKIQMAFDTDVNLAIREQNIPMLDQAGVFYTVLIPKSDEEKKSFLRELKPKVWNELPVNLEEVFIAKFGGKRRW.

The ABC transporter domain maps to 2-227; the sequence is IELRQLSKAI…YIKIQMAFDT (226 aa). 34–41 lines the ATP pocket; the sequence is GRNGSGKT.

It belongs to the ABC transporter superfamily. In terms of assembly, the complex is composed of 2 ATP-binding proteins (YtrB and YtrE), 2 transmembrane proteins (YtrC and YtrD) and a solute-binding protein (YtrF).

Its subcellular location is the cell membrane. Its function is as follows. Part of the ABC transporter complex YtrBCDEF that plays a role in acetoin utilization during stationary phase and sporulation. The protein is ABC transporter ATP-binding protein YtrB (ytrB) of Bacillus subtilis (strain 168).